Here is a 121-residue protein sequence, read N- to C-terminus: Large ribosomal subunit protein uL18 (121 aa).

It belongs to the universal ribosomal protein uL18 family. As to quaternary structure, part of the 50S ribosomal subunit; part of the 5S rRNA/L5/L18/L25 subcomplex. Contacts the 5S and 23S rRNAs.

Its function is as follows. This is one of the proteins that bind and probably mediate the attachment of the 5S RNA into the large ribosomal subunit, where it forms part of the central protuberance. The polypeptide is Large ribosomal subunit protein uL18 (Acidovorax ebreus (strain TPSY) (Diaphorobacter sp. (strain TPSY))).